The sequence spans 219 residues: MDGERKIKIALTKGRIEKEAVKIFERAGVDCSEVINKGRKLIFHNMESNIDFVLVKAPDVLTYVEHGVVDIGIVGKDTLLEQDKNFYEVLDLGFGKCKFSLAGLKDSNFYSGYNRKKIATKYPNVARSYFRKLGQDVEIIKIEGSVELAPILGLADAIVDIVETGSTLKENGLVIYKDICSISARMVVNMASMKMKKEEIEKIINKVQVQINEIEKAVR.

The protein belongs to the ATP phosphoribosyltransferase family. Short subfamily. In terms of assembly, heteromultimer composed of HisG and HisZ subunits.

It is found in the cytoplasm. It carries out the reaction 1-(5-phospho-beta-D-ribosyl)-ATP + diphosphate = 5-phospho-alpha-D-ribose 1-diphosphate + ATP. It functions in the pathway amino-acid biosynthesis; L-histidine biosynthesis; L-histidine from 5-phospho-alpha-D-ribose 1-diphosphate: step 1/9. Its function is as follows. Catalyzes the condensation of ATP and 5-phosphoribose 1-diphosphate to form N'-(5'-phosphoribosyl)-ATP (PR-ATP). Has a crucial role in the pathway because the rate of histidine biosynthesis seems to be controlled primarily by regulation of HisG enzymatic activity. This Clostridium kluyveri (strain NBRC 12016) protein is ATP phosphoribosyltransferase.